The following is a 795-amino-acid chain: Protein ROOT HAIR DEFECTIVE 3 homolog 1 (795 aa).

At 1-682 (MDADKSEGCC…EANRRGNNWL (682 aa)) the chain is on the cytoplasmic side. One can recognise a GB1/RHD3-type G domain in the interval 39–254 (GLSYAVVSIM…IAPGGLAGDR (216 aa)). GTP is bound at residue 49 to 56 (GPQSSGKS). Positions 218-244 (VALSSYEEKEEQFKEQIASLRQRFMHS) form a coiled coil. A helical transmembrane segment spans residues 683–703 (PPPWAILALIVLGFNEFMTLL). At 704–706 (RNP) the chain is on the lumenal side. Residues 707–727 (LYLGVMFVAFLLAKALWTQLD) form a helical membrane-spanning segment. The Cytoplasmic portion of the chain corresponds to 728 to 795 (IPGEFRNGAL…PDHKSSSKED (68 aa)). Residues 761 to 795 (QGEDPPAANPENRRSSNNTSSSENPPDHKSSSKED) are disordered. Residues 775-784 (SSNNTSSSEN) are compositionally biased toward low complexity. The span at 785–795 (PPDHKSSSKED) shows a compositional bias: basic and acidic residues.

This sequence belongs to the TRAFAC class dynamin-like GTPase superfamily. GB1/RHD3 GTPase family. RHD3 subfamily. Specifically expressed in flowers.

It is found in the endoplasmic reticulum membrane. Functionally, probable GTP-binding protein that may be involved in cell development. The protein is Protein ROOT HAIR DEFECTIVE 3 homolog 1 of Arabidopsis thaliana (Mouse-ear cress).